An 822-amino-acid chain; its full sequence is von Willebrand factor A domain-containing protein 5A (822 aa).

In terms of domain architecture, VIT spans 1 to 131 (MEHHWGLITG…KVAVTLRYVQ (131 aa)). The VWFA domain maps to 281–469 (EFVFLMDRSG…LALQCALDDI (189 aa)). The interval 657-682 (SMPSPAPIENQGVADSSNEKSNSQNE) is disordered. The span at 669-680 (VADSSNEKSNSQ) shows a compositional bias: polar residues.

Its function is as follows. May play a role in tumorigenesis as a tumor suppressor. Altered expression of this protein and disruption of the molecular pathway it is involved in may contribute directly to or modify tumorigenesis. This is von Willebrand factor A domain-containing protein 5A (Vwa5a) from Rattus norvegicus (Rat).